The primary structure comprises 522 residues: GMP synthase [glutamine-hydrolyzing] (522 aa).

Positions 9–204 (KILILDFGAQ…VVDICGCQML (196 aa)) constitute a Glutamine amidotransferase type-1 domain. The active-site Nucleophile is the Cys-86. Residues His-178 and Glu-180 contribute to the active site. In terms of domain architecture, GMPS ATP-PPase spans 205–397 (WTAANIIEDQ…LGLPHAMVYR (193 aa)). Residue 232–238 (SGGVDSS) participates in ATP binding.

As to quaternary structure, homodimer.

It carries out the reaction XMP + L-glutamine + ATP + H2O = GMP + L-glutamate + AMP + diphosphate + 2 H(+). Its pathway is purine metabolism; GMP biosynthesis; GMP from XMP (L-Gln route): step 1/1. Catalyzes the synthesis of GMP from XMP. This Xylella fastidiosa (strain 9a5c) protein is GMP synthase [glutamine-hydrolyzing] (guaA).